The chain runs to 162 residues: uncharacterized protein (162 aa).

The next 5 helical transmembrane spans lie at 15-40 (TIYS…YFLL), 47-66 (ISML…TTAL), 76-98 (YSIL…FLVY), 105-124 (KWLG…DPLL), and 128-150 (GYAV…WLVI).

It localises to the cell membrane. This is an uncharacterized protein from Archaeoglobus fulgidus (strain ATCC 49558 / DSM 4304 / JCM 9628 / NBRC 100126 / VC-16).